The following is a 180-amino-acid chain: Superoxide dismutase [Cu-Zn] (180 aa).

A signal peptide spans 1 to 19 (MFMNLLTQVSNAIFPQVEA). Residues His-68, His-70, and His-85 each contribute to the Cu cation site. A disulfide bridge connects residues Cys-79 and Cys-171. Positions 85, 93, 102, and 105 each coordinate Zn(2+). His-142 is a Cu cation binding site.

The protein belongs to the Cu-Zn superoxide dismutase family. Homodimer. The cofactor is Cu cation. Zn(2+) is required as a cofactor.

It is found in the cytoplasm. It catalyses the reaction 2 superoxide + 2 H(+) = H2O2 + O2. The insertion of copper which activates the protein requires glutathione. This is independent of copper chaperone for SOD1 (CCS), which activates orthologs. Functionally, protects cells against oxidative stress by converting superoxide radicals to hydrogen peroxide. Required for normal brood size. May be involved in regulating mpk-1 phosphorylation downstream of phosphatase ptp-2 during oocyte maturation. This is Superoxide dismutase [Cu-Zn] (sod-1) from Caenorhabditis elegans.